The chain runs to 155 residues: HTH-type transcriptional repressor MdtR (155 aa).

The 137-residue stretch at 4–140 (ADQLMSDIQL…AAHITAKLAQ (137 aa)) folds into the HTH marR-type domain. Residues 54–77 (VSEIAERMEVKPSAVTLMADRLEQ) constitute a DNA-binding region (H-T-H motif).

Homodimer.

It localises to the cytoplasm. The binding of MdtR to the mdtRP promoter region is severely inhibited by adding excess concentrations of fusidic acid or novobiocin but not by actinomycin or streptomycin. In terms of biological role, repressor of the multidrug resistance operon mdtRP. Acts by binding directly to the mdtRP promoter region, leading to the repression of its expression. The protein is HTH-type transcriptional repressor MdtR of Bacillus subtilis (strain 168).